Reading from the N-terminus, the 585-residue chain is uncharacterized protein (585 aa).

Helical transmembrane passes span 18–38, 55–75, 128–148, 150–170, 238–258, and 276–296; these read FMWS…YPII, AAWV…ATFF, FFLS…AISL, VMFY…PFLA, IWSA…VALL, and VAFF…GFVI. Residues 18-301 form the ABC transmembrane type-1 domain; the sequence is FMWSLLAMLL…LGFVINMFSQ (284 aa). The region spanning 335 to 570 is the ABC transporter domain; it reads VHFKNVSLAY…GGYYKKIYDL (236 aa). Residue 369-376 participates in ATP binding; it reads GPTGSGKS.

It belongs to the ABC transporter superfamily.

Its subcellular location is the cell membrane. This is an uncharacterized protein from Bacillus subtilis (strain 168).